The sequence spans 504 residues: Anaerobic nitric oxide reductase transcription regulator NorR (504 aa).

D57 is modified (4-aspartylphosphate). Residues 187 to 416 enclose the Sigma-54 factor interaction domain; the sequence is MIGLSPGMTQ…LEHAIHRAVV (230 aa). ATP-binding positions include 215 to 222 and 278 to 287; these read GETGTGKE and ADNGTLFLDE. The H-T-H motif DNA-binding region spans 479 to 498; the sequence is WAASARMLETDVANLHRLAK.

It participates in nitrogen metabolism; nitric oxide reduction. In terms of biological role, required for the expression of anaerobic nitric oxide (NO) reductase, acts as a transcriptional activator for at least the norVW operon. Activation also requires sigma-54. This chain is Anaerobic nitric oxide reductase transcription regulator NorR, found in Escherichia coli O7:K1 (strain IAI39 / ExPEC).